Consider the following 796-residue polypeptide: Histone-lysine N-methyltransferase PRDM9 (796 aa).

Residues 1 to 23 (MSRTMNTNKPEENSTEGDAGKLE) form a disordered region. The region spanning 27–90 (KVKDEFKDIS…QRQAIKPQIN (64 aa)) is the KRAB-related domain. The interval 149-172 (SEHAQKPVCSPEEGNTSGQHFGKK) is disordered. Zn(2+)-binding residues include Cys209, Cys212, Cys220, and His223. An SET domain is found at 248-362 (PGLRIGPSGI…PGRELLVWYG (115 aa)). Residues 260–262 (AGL), Tyr295, and 324–325 (NC) contribute to the S-adenosyl-L-methionine site. Position 292–298 (292–298 (NSGYSWL)) interacts with substrate. Position 361 (Tyr361) interacts with substrate. An N6,N6,N6-trimethyllysine; alternate modification is found at Lys372. The residue at position 372 (Lys372) is an N6-methyllysine; alternate. Residues Lys376 and Lys378 each carry the N6-methyllysine modification. The C2H2-type 1 zinc-finger motif lies at 392–415 (HPCFLCSLAFSSQKFLTQHVEWNH). Residues Cys394, Cys397, His410, and His415 each coordinate Zn(2+). Residues 443-457 (FDSQNKNDKASNEVK) are compositionally biased toward basic and acidic residues. A disordered region spans residues 443–497 (FDSQNKNDKASNEVKRKSKPRHKWTRQRISTAFSSTLKEQMRSEESKRTVEEELR). A compositionally biased stretch (basic residues) spans 458–468 (RKSKPRHKWTR). Residues 469-480 (QRISTAFSSTLK) are compositionally biased toward polar residues. Over residues 481–497 (EQMRSEESKRTVEEELR) the composition is skewed to basic and acidic residues. The C2H2-type 2; degenerate zinc-finger motif lies at 522–540 (QCGQCFSDKSNVSEHQRTH). 9 C2H2-type zinc fingers span residues 546–568 (YICR…QRTH), 574–596 (YICR…QRTH), 602–624 (YICR…QRTH), 630–652 (YICR…QRTH), 658–680 (YICR…QRTH), 686–708 (YICR…LRTH), 714–736 (YICR…QRTH), 742–764 (YICR…QRTH), and 770–792 (YICR…QRTH). 12 residues coordinate Zn(2+): Cys716, Cys719, His732, His736, Cys744, Cys747, His760, His764, Cys772, Cys775, His788, and His792.

This sequence belongs to the class V-like SAM-binding methyltransferase superfamily. Homodimer. Interacts with EHMT2 and CDYL; interaction only takes place when PRDM9 is bound to hotspot DNA. Interacts with CXXC1; this interaction does not link PRDM9-activated recombination hotspot sites with DSB machinery and is not required for the hotspot recognition pathway. Forms a complex with EWSR1, REC8, SYCP3 and SYCP1; complex formation is dependent of phosphorylated form of REC8 and requires PRDM9 bound to hotspot DNA; EWSR1 joins PRDM9 with the chromosomal axis through REC8. In terms of processing, mono-methylated; automethylated. Tri-methylated; automethylated. Mono-methylation is predominant; automethylation is lower and slower than H3 peptide methylation and is in a highest S-adenosyl-L-methionine concentration-dependent. There are two major sites for automethylation at Lys-372 and Lys-378. Lysines can be simultaneously methylated, such as Lys-372(me3)/Lys-376(me1), Lys-372(me1)/Lys-378(me1) and Lys-372(me1)/Lys-376(me1)/Lys-378(me1). Automethylation is an intramolecular (cis) process.

Its subcellular location is the nucleus. It localises to the chromosome. It carries out the reaction L-lysyl-[protein] + S-adenosyl-L-methionine = N(6)-methyl-L-lysyl-[protein] + S-adenosyl-L-homocysteine + H(+). The catalysed reaction is N(6)-methyl-L-lysyl-[protein] + S-adenosyl-L-methionine = N(6),N(6)-dimethyl-L-lysyl-[protein] + S-adenosyl-L-homocysteine + H(+). It catalyses the reaction L-lysyl(4)-[histone H3] + 3 S-adenosyl-L-methionine = N(6),N(6),N(6)-trimethyl-L-lysyl(4)-[histone H3] + 3 S-adenosyl-L-homocysteine + 3 H(+). The enzyme catalyses L-lysyl(36)-[histone H3] + 3 S-adenosyl-L-methionine = N(6),N(6),N(6)-trimethyl-L-lysyl(36)-[histone H3] + 3 S-adenosyl-L-homocysteine + 3 H(+). It carries out the reaction L-lysyl(9)-[histone H3] + 3 S-adenosyl-L-methionine = N(6),N(6),N(6)-trimethyl-L-lysyl(9)-[histone H3] + 3 S-adenosyl-L-homocysteine + 3 H(+). The catalysed reaction is L-lysyl(20)-[histone H4] + S-adenosyl-L-methionine = N(6)-methyl-L-lysyl(20)-[histone H4] + S-adenosyl-L-homocysteine + H(+). It catalyses the reaction N(6)-methyl-L-lysyl(20)-[histone H4] + S-adenosyl-L-methionine = N(6),N(6)-dimethyl-L-lysyl(20)-[histone H4] + S-adenosyl-L-homocysteine + H(+). Functionally, histone methyltransferase that sequentially mono-, di-, and tri-methylates both 'Lys-4' (H3K4) and 'Lys-36' (H3K36) of histone H3 to produce respectively trimethylated 'Lys-4' (H3K4me3) and trimethylated 'Lys-36' (H3K36me3) histone H3 and plays a key role in meiotic prophase by determining hotspot localization thereby promoting meiotic recombination. Can also methylate all four core histones with H3 being the best substrate and the most highly modified. Is also able, on one hand, to mono and di-methylate H4K20 and on other hand to trimethylate H3K9 with the di-methylated H3K9 as the best substrate. During meiotic prophase, binds specific DNA sequences through its zinc finger domains thereby determining hotspot localization where it promotes local H3K4me3 and H3K36me3 enrichment on the same nucleosomes through its histone methyltransferase activity. Thereby promotes double-stranded breaks (DSB) formation, at this subset of PRDM9-binding sites, that initiates meiotic recombination for the proper meiotic progression. During meiotic progression hotspot-bound PRDM9 interacts with several complexes; in early leptonema binds CDYL and EHMT2 followed by EWSR1 and CXXC1 by the end of leptonema. EWSR1 joins PRDM9 with the chromosomal axis through REC8. In this way, controls the DSB repair pathway, pairing of homologous chromosomes and sex body formation. Moreover plays a central role in the transcriptional activation of genes during early meiotic prophase thanks to H3K4me3 and H3K36me3 enrichment that represents a specific tag for epigenetic transcriptional activation. In addition performs automethylation. Acetylation and phosphorylation of histone H3 attenuate or prevent histone H3 methylation. The sequence is that of Histone-lysine N-methyltransferase PRDM9 from Rattus norvegicus (Rat).